Reading from the N-terminus, the 401-residue chain is Argininosuccinate synthase (401 aa).

9–17 (AYSGGLDTS) is a binding site for ATP. Residue tyrosine 86 coordinates L-citrulline. Glycine 116 contacts ATP. Residues threonine 118, asparagine 122, and aspartate 123 each coordinate L-aspartate. Asparagine 122 provides a ligand contact to L-citrulline. 5 residues coordinate L-citrulline: arginine 126, serine 174, serine 183, glutamate 259, and tyrosine 271.

Belongs to the argininosuccinate synthase family. Type 1 subfamily. As to quaternary structure, homotetramer.

The protein resides in the cytoplasm. It carries out the reaction L-citrulline + L-aspartate + ATP = 2-(N(omega)-L-arginino)succinate + AMP + diphosphate + H(+). It participates in amino-acid biosynthesis; L-arginine biosynthesis; L-arginine from L-ornithine and carbamoyl phosphate: step 2/3. The polypeptide is Argininosuccinate synthase (Bacillus mycoides (strain KBAB4) (Bacillus weihenstephanensis)).